We begin with the raw amino-acid sequence, 482 residues long: [Fructose-bisphosphate aldolase]-lysine N-methyltransferase, chloroplastic (482 aa).

A chloroplast-targeting transit peptide spans methionine 1 to arginine 57. The SET domain occupies glutamine 59–aspartate 282. Residues glutamate 75–leucine 77 and arginine 217 contribute to the S-adenosyl-L-methionine site. Substrate contacts are provided by arginine 217, arginine 221, and aspartate 234. Asparagine 237–histidine 238 lines the S-adenosyl-L-methionine pocket. Residues tyrosine 249, tyrosine 281, and tyrosine 294 each coordinate substrate.

Belongs to the class V-like SAM-binding methyltransferase superfamily. Plant protein-lysine LSMT methyltransferase family.

Its subcellular location is the plastid. The protein resides in the chloroplast stroma. It carries out the reaction [fructose-bisphosphate aldolase]-L-lysine + 3 S-adenosyl-L-methionine = [fructose-bisphosphate aldolase]-N(6),N(6),N(6)-trimethyl-L-lysine + 3 S-adenosyl-L-homocysteine + 3 H(+). In terms of biological role, protein-lysine methyltransferase methylating chloroplastic fructose 1,6-bisphosphate aldolases. Can also use with low efficiency gamma-tocopherol methyltransferase as substrate, but not a cytosolic aldolase. Able to interact with unmethylated Rubisco, but unlike in pea, the complex is catalytically unproductive. This Arabidopsis thaliana (Mouse-ear cress) protein is [Fructose-bisphosphate aldolase]-lysine N-methyltransferase, chloroplastic (LSMT-L).